A 513-amino-acid chain; its full sequence is Aromatic amino acid aminotransferase 2 (513 aa).

2 positions are modified to phosphoserine: Ser-90 and Ser-92. Pyridoxal 5'-phosphate is bound by residues Tyr-102, 143-144, Asn-232, Tyr-263, and 314-316; these read SN and TFS. Asn-232 provides a ligand contact to substrate. The residue at position 317 (Lys-317) is an N6-(pyridoxal phosphate)lysine. Arg-324 serves as a coordination point for pyridoxal 5'-phosphate. Arg-481 provides a ligand contact to substrate.

It belongs to the class-I pyridoxal-phosphate-dependent aminotransferase family. The cofactor is pyridoxal 5'-phosphate.

The protein localises to the cytoplasm. The catalysed reaction is an aromatic L-alpha-amino acid + 2-oxoglutarate = an aromatic oxo-acid + L-glutamate. It catalyses the reaction an aromatic L-alpha-amino acid + 4-methylsulfanyl-2-oxobutanoate = an aromatic oxo-acid + L-methionine. The enzyme catalyses L-kynurenine + 2-oxoglutarate = kynurenate + L-glutamate + H2O. The protein operates within amino-acid biosynthesis; L-methionine biosynthesis via salvage pathway; L-methionine from S-methyl-5-thio-alpha-D-ribose 1-phosphate: step 6/6. It participates in amino-acid degradation; L-kynurenine degradation; kynurenate from L-kynurenine: step 1/2. General aromatic amino acid transaminase involved in several otherwise unrelated metabolic pathways. Mainly involved in tryptophan degradation. Active with phenylalanine, tyrosine and tryptophan as amino donors and with phenylpyruvate, hydroxyphenylpyruvate and pyruvate as amino acceptors. Does not accept glutamate or 2-oxoglutarate as substrates. Also active with methionine, leucine, glutamine and kynurenine. Catalyzes the formation of methionine from 2-keto-4-methylthiobutyrate (KMTB) in the methionine salvage pathway primarily using aromatic amino acids (tyrosine, phenylalanine and tryptophan) as the amino donors. Catalyzes the irreversible transamination of the L-tryptophan metabolite L-kynurenine to form kynurenic acid (KA) with pyruvate as amino acceptor. The polypeptide is Aromatic amino acid aminotransferase 2 (Saccharomyces cerevisiae (strain ATCC 204508 / S288c) (Baker's yeast)).